Reading from the N-terminus, the 353-residue chain is C2 calcium-dependent domain-containing protein 4D (353 aa).

Residues 135–191 form a disordered region; sequence CRAPDSDTASSPDSSPFGSPRPGLGRRRVSRPHSLSPEKASSADTSPHSPRRAGPPT. Low complexity predominate over residues 140–150; it reads SDTASSPDSSP. The region spanning 217–343 is the C2 domain; that stretch reads RGGQLRLSTE…PPLGGGLGPG (127 aa).

This chain is C2 calcium-dependent domain-containing protein 4D (C2CD4D), found in Homo sapiens (Human).